Reading from the N-terminus, the 290-residue chain is Ribosomal RNA small subunit methyltransferase A (290 aa).

S-adenosyl-L-methionine contacts are provided by Asn27, Leu29, Gly54, Glu75, Asp100, and Asn125.

It belongs to the class I-like SAM-binding methyltransferase superfamily. rRNA adenine N(6)-methyltransferase family. RsmA subfamily.

Its subcellular location is the cytoplasm. The enzyme catalyses adenosine(1518)/adenosine(1519) in 16S rRNA + 4 S-adenosyl-L-methionine = N(6)-dimethyladenosine(1518)/N(6)-dimethyladenosine(1519) in 16S rRNA + 4 S-adenosyl-L-homocysteine + 4 H(+). In terms of biological role, specifically dimethylates two adjacent adenosines (A1518 and A1519) in the loop of a conserved hairpin near the 3'-end of 16S rRNA in the 30S particle. May play a critical role in biogenesis of 30S subunits. The polypeptide is Ribosomal RNA small subunit methyltransferase A (Streptococcus agalactiae serotype V (strain ATCC BAA-611 / 2603 V/R)).